Here is a 203-residue protein sequence, read N- to C-terminus: MKLLHVDSSILGTYSVSRQLSAEIVAEWRKSRPDTTVEYLDLALNAPNHFGADAIAIKGIAQPEPTEAQRAENALSEQLVSQFLASDVIVIGAPFYNFSIPTQLKAWIDRLAQPGRTFTYNEKGPLGLATGKTVIVASTRGGAYSTSEGGQAMEHQESYLKVVFGFFGITDVRIVRAEGLAMGDAPKAAALSAARADMELATA.

Residues S9, 15-17, and 139-142 contribute to the FMN site; these read SVS and TRGG.

This sequence belongs to the azoreductase type 1 family. Homodimer. FMN is required as a cofactor.

The catalysed reaction is 2 a quinone + NADH + H(+) = 2 a 1,4-benzosemiquinone + NAD(+). The enzyme catalyses N,N-dimethyl-1,4-phenylenediamine + anthranilate + 2 NAD(+) = 2-(4-dimethylaminophenyl)diazenylbenzoate + 2 NADH + 2 H(+). Its function is as follows. Quinone reductase that provides resistance to thiol-specific stress caused by electrophilic quinones. Also exhibits azoreductase activity. Catalyzes the reductive cleavage of the azo bond in aromatic azo compounds to the corresponding amines. The sequence is that of FMN-dependent NADH:quinone oxidoreductase from Albidiferax ferrireducens (strain ATCC BAA-621 / DSM 15236 / T118) (Rhodoferax ferrireducens).